The chain runs to 611 residues: Mitogen-activated protein kinase 10 (611 aa).

The Protein kinase domain maps to 25-316 (YKIQEVIGKG…AEEALAHPYF (292 aa)). ATP is bound by residues 31-39 (IGKGSYGVV) and Lys54. Asp151 functions as the Proton acceptor in the catalytic mechanism. Thr187 carries the post-translational modification Phosphothreonine. Positions 187 to 189 (TDY) match the TXY motif. Residue Tyr189 is modified to Phosphotyrosine. The tract at residues 394-481 (ENGGNGPVIP…RVVGPVLPYE (88 aa)) is disordered. Residues 426–439 (EQPRIGPSRDKPSD) are compositionally biased toward basic and acidic residues.

It belongs to the protein kinase superfamily. CMGC Ser/Thr protein kinase family. MAP kinase subfamily. In terms of processing, dually phosphorylated on Thr-187 and Tyr-189, which activates the enzyme.

It catalyses the reaction L-seryl-[protein] + ATP = O-phospho-L-seryl-[protein] + ADP + H(+). It carries out the reaction L-threonyl-[protein] + ATP = O-phospho-L-threonyl-[protein] + ADP + H(+). With respect to regulation, activated by threonine and tyrosine phosphorylation. The protein is Mitogen-activated protein kinase 10 (MPK10) of Oryza sativa subsp. japonica (Rice).